Consider the following 211-residue polypeptide: Protein-L-isoaspartate O-methyltransferase (211 aa).

The active site involves Ser62.

It belongs to the methyltransferase superfamily. L-isoaspartyl/D-aspartyl protein methyltransferase family.

It localises to the cytoplasm. The enzyme catalyses [protein]-L-isoaspartate + S-adenosyl-L-methionine = [protein]-L-isoaspartate alpha-methyl ester + S-adenosyl-L-homocysteine. In terms of biological role, catalyzes the methyl esterification of L-isoaspartyl residues in peptides and proteins that result from spontaneous decomposition of normal L-aspartyl and L-asparaginyl residues. It plays a role in the repair and/or degradation of damaged proteins. The polypeptide is Protein-L-isoaspartate O-methyltransferase (Shewanella halifaxensis (strain HAW-EB4)).